Reading from the N-terminus, the 517-residue chain is General transcription factor IIF subunit 1 (517 aa).

Alanine 2 is modified (N-acetylalanine). Residue threonine 156 is modified to Phosphothreonine. A disordered region spans residues 178 to 466 (QQRRLKDQDQ…DAVRRYLTRK (289 aa)). Phosphoserine is present on residues serine 217, serine 218, serine 221, and serine 224. Residues 232–251 (PKAKKKAPLAKGGRKKKKKK) are compositionally biased toward basic residues. Acidic residues-rich tracts occupy residues 255-270 (DEAF…EGQE) and 303-325 (EQSD…EEEE). Phosphothreonine is present on threonine 331. Residues 343 to 355 (EESDSSEESDIDS) show a composition bias toward acidic residues. The span at 364 to 374 (AKKKTPPKRER) shows a compositional bias: basic residues. Phosphoserine occurs at positions 377, 380, 381, and 385. The segment covering 377–391 (SGGSSRGNSRPGTPS) has biased composition (low complexity). Position 389 is a phosphothreonine (threonine 389). Serine 391 carries the phosphoserine modification. At lysine 407 the chain carries N6-acetyllysine. The segment covering 428–452 (GPQSLSGKSTPQPPSGKTTPNSGDV) has biased composition (polar residues). Phosphoserine occurs at positions 431, 433, and 436. 2 positions are modified to phosphothreonine: threonine 437 and threonine 446. The residue at position 449 (serine 449) is a Phosphoserine. Glutamate 503, histidine 512, and glutamate 517 together coordinate Zn(2+).

It belongs to the TFIIF alpha subunit family. In terms of assembly, heterodimer of an alpha and a beta subunit. Interacts with GTF2F2, CTDP1, TAF6/TAFII80 and URI1. Interacts with GTF2B (via C-terminus and preferentially via acetylated form); this interaction prevents binding of GTF2B to GTF2F2. Part of TBP-based Pol II pre-initiation complex (PIC), in which Pol II core assembles with general transcription factors and other specific initiation factors including GTF2E1, GTF2E2, GTF2F1, GTF2F2, TCEA1, ERCC2, ERCC3, GTF2H2, GTF2H3, GTF2H4, GTF2H5, GTF2A1, GTF2A2, GTF2B and TBP; this large multi-subunit PIC complex mediates DNA unwinding and targets Pol II core to the transcription start site where the first phosphodiester bond forms. In terms of processing, phosphorylated on Ser and other residues by TAF1 and casein kinase II-like kinases.

Its subcellular location is the nucleus. Functionally, TFIIF is a general transcription initiation factor that binds to RNA polymerase II and helps to recruit it to the initiation complex in collaboration with TFIIB. It promotes transcription elongation. The polypeptide is General transcription factor IIF subunit 1 (GTF2F1) (Homo sapiens (Human)).